Reading from the N-terminus, the 193-residue chain is Transcriptional activator GvpE2 (193 aa).

143–148 (KRKVYR) contacts DNA. A leucine-zipper region spans residues 153–184 (QAAIEHVDSVVLQLLTFAVGLQTIMADCIVNQ).

In terms of assembly, homodimer. Interacts with endogenous GvpD, also with GvpD from H.mediterranei.

Its subcellular location is the cytoplasm. Degraded once GvpD is translated; degradation requires 'Arg-494' of GvpD; tested in transgenic H.volcanii. Fusion of green fluorescent protein to its C-terminus partially protects it from degradation. Its function is as follows. Plays a regulatory role in gas vesicle synthesis, required to activate transcription of the c-gvpA operon. Gas vesicles are hollow, gas filled proteinaceous nanostructures found in several microbial planktonic microorganisms. They allow positioning of halobacteria at the optimal depth for growth in the poorly aerated, shallow brine pools of their habitat. In terms of biological role, expression of 2 c-vac DNA fragments containing 2 divergently transcribed regions (gvpE-gvpF-gvpG-gvpH-gvpI-gvpJ-gvpK-gvpL-gvpM and gvpA-gvpC-gvpN-gvpO) allows H.volcanii to produce gas vesicles. All site-directed mutagenesis is tested in H.volcanii. This Halobacterium salinarum (strain ATCC 700922 / JCM 11081 / NRC-1) (Halobacterium halobium) protein is Transcriptional activator GvpE2.